Here is a 126-residue protein sequence, read N- to C-terminus: Arginine decarboxylase proenzyme (126 aa).

The active-site Schiff-base intermediate with substrate; via pyruvic acid is the Ser-74. Position 74 is a pyruvic acid (Ser); by autocatalysis (Ser-74). Residue His-79 is the Proton acceptor; for processing activity of the active site. Cys-94 serves as the catalytic Proton donor; for catalytic activity.

The protein belongs to the prokaryotic AdoMetDC family. Type 1 subfamily. Heterooctamer of four alpha and four beta chains arranged as a tetramer of alpha/beta heterodimers. The cofactor is pyruvate. In terms of processing, is synthesized initially as an inactive proenzyme. Formation of the active enzyme involves a self-maturation process in which the active site pyruvoyl group is generated from an internal serine residue via an autocatalytic post-translational modification. Two non-identical subunits are generated from the proenzyme in this reaction, and the pyruvate is formed at the N-terminus of the alpha chain, which is derived from the carboxyl end of the proenzyme. The post-translation cleavage follows an unusual pathway, termed non-hydrolytic serinolysis, in which the side chain hydroxyl group of the serine supplies its oxygen atom to form the C-terminus of the beta chain, while the remainder of the serine residue undergoes an oxidative deamination to produce ammonia and the pyruvoyl group blocking the N-terminus of the alpha chain.

The enzyme catalyses L-arginine + H(+) = agmatine + CO2. It participates in amine and polyamine biosynthesis; agmatine biosynthesis; agmatine from L-arginine: step 1/1. Specifically catalyzes the decarboxylation of L-arginine to agmatine. Has no S-adenosylmethionine decarboxylase (AdoMetDC) activity. This Pyrobaculum calidifontis (strain DSM 21063 / JCM 11548 / VA1) protein is Arginine decarboxylase proenzyme.